We begin with the raw amino-acid sequence, 347 residues long: UDP-3-O-acylglucosamine N-acyltransferase (347 aa).

Histidine 241 acts as the Proton acceptor in catalysis.

It belongs to the transferase hexapeptide repeat family. LpxD subfamily. As to quaternary structure, homotrimer.

It carries out the reaction a UDP-3-O-[(3R)-3-hydroxyacyl]-alpha-D-glucosamine + a (3R)-hydroxyacyl-[ACP] = a UDP-2-N,3-O-bis[(3R)-3-hydroxyacyl]-alpha-D-glucosamine + holo-[ACP] + H(+). The protein operates within bacterial outer membrane biogenesis; LPS lipid A biosynthesis. Its function is as follows. Catalyzes the N-acylation of UDP-3-O-acylglucosamine using 3-hydroxyacyl-ACP as the acyl donor. Is involved in the biosynthesis of lipid A, a phosphorylated glycolipid that anchors the lipopolysaccharide to the outer membrane of the cell. The polypeptide is UDP-3-O-acylglucosamine N-acyltransferase (Neisseria gonorrhoeae (strain NCCP11945)).